Consider the following 201-residue polypeptide: Probable cytokinin riboside 5'-monophosphate phosphoribohydrolase LOG6 (201 aa).

Residues E89, 107–108, 124–130, and T136 contribute to the substrate site; these read RK and GYGTLEE.

It belongs to the LOG family.

It carries out the reaction N(6)-(dimethylallyl)adenosine 5'-phosphate + H2O = N(6)-dimethylallyladenine + D-ribose 5-phosphate. The catalysed reaction is 9-ribosyl-trans-zeatin 5'-phosphate + H2O = trans-zeatin + D-ribose 5-phosphate. Functionally, cytokinin-activating enzyme working in the direct activation pathway. Phosphoribohydrolase that converts inactive cytokinin nucleotides to the biologically active free-base forms. The sequence is that of Probable cytokinin riboside 5'-monophosphate phosphoribohydrolase LOG6 (LOG6) from Arabidopsis thaliana (Mouse-ear cress).